We begin with the raw amino-acid sequence, 229 residues long: MENSLKIKDIPKNERPKEKLLSYGADTLNNSELLAIILRTGTKGENVLQLSNRLLSEFQGLDGILEASLDDITSIKGIKEGKASQILALAELFRRFRTFKSADRDIKIMSPNDIAMLINGEMSLLKQEILKVIFLNTKNIVIGTKDVFKGSLNTSIVHPREIFKEAVNKSSTKIIICHNHPSGDPTPSKEDINITLRIKECGEIMGIQLLDHIIIGKNGFISLKEKGFI.

Positions 107–229 (KIMSPNDIAM…FISLKEKGFI (123 aa)) constitute an MPN domain. Zn(2+)-binding residues include histidine 178, histidine 180, and aspartate 191. Residues 178–191 (HNHPSGDPTPSKED) carry the JAMM motif motif.

It belongs to the UPF0758 family.

This chain is UPF0758 protein CLH_0547, found in Clostridium botulinum (strain Alaska E43 / Type E3).